The sequence spans 34 residues: Mu-theraphotoxin-Df1a (34 aa).

Cystine bridges form between Cys2–Cys16, Cys9–Cys21, and Cys15–Cys28. Phenylalanine amide is present on Phe34.

This sequence belongs to the neurotoxin 10 (Hwtx-1) family. 54 (ProTx-1) subfamily. In terms of processing, C-terminal amidation is important for the high potency of the toxin. As to expression, expressed by the venom gland.

The protein localises to the secreted. Functionally, inhibits sodium channel Nav1.7/SCN9A with high potency (IC(50)=117 nM) and Nav1.2/SCN2A, Nav1.3/SCN3A, Nav1.6/SCN8A and Nav1.5/SCN5 with weaker potency. Also inhibits voltage-gated calcium channel Cav3.1/CACNA1G, Cav3.2/CACNA1H and Cav3.3/CACNA1I. This is Mu-theraphotoxin-Df1a from Davus fasciatus (Costa Rican tiger rump).